Consider the following 37-residue polypeptide: MKVRPSVKKICEKCKVIKRHGKVMVICENPKHKQRQG.

Belongs to the bacterial ribosomal protein bL36 family.

This chain is Large ribosomal subunit protein bL36, found in Desulfitobacterium hafniense (strain Y51).